We begin with the raw amino-acid sequence, 137 residues long: Large ribosomal subunit protein uL16 (137 aa).

This sequence belongs to the universal ribosomal protein uL16 family. In terms of assembly, part of the 50S ribosomal subunit.

In terms of biological role, binds 23S rRNA and is also seen to make contacts with the A and possibly P site tRNAs. The polypeptide is Large ribosomal subunit protein uL16 (Rhizobium rhizogenes (strain K84 / ATCC BAA-868) (Agrobacterium radiobacter)).